We begin with the raw amino-acid sequence, 273 residues long: Large ribosomal subunit protein uL2 (273 aa).

The tract at residues 221-262 is disordered; the sequence is RGTAMNPVDHPHGGGEGRNFGKHPVTPWGVQTKGKKTRHNKR. Residues 253-262 show a composition bias toward basic residues; the sequence is KGKKTRHNKR.

It belongs to the universal ribosomal protein uL2 family. As to quaternary structure, part of the 50S ribosomal subunit. Forms a bridge to the 30S subunit in the 70S ribosome.

One of the primary rRNA binding proteins. Required for association of the 30S and 50S subunits to form the 70S ribosome, for tRNA binding and peptide bond formation. It has been suggested to have peptidyltransferase activity; this is somewhat controversial. Makes several contacts with the 16S rRNA in the 70S ribosome. This chain is Large ribosomal subunit protein uL2, found in Haemophilus influenzae (strain ATCC 51907 / DSM 11121 / KW20 / Rd).